A 1859-amino-acid polypeptide reads, in one-letter code: Protein TIC 214 (1859 aa).

The next 6 membrane-spanning stretches (helical) occupy residues 18 to 38, 64 to 84, 87 to 107, 124 to 144, 172 to 192, and 221 to 241; these read IINSVVVVGLYYGFLTTFSIG, FITGQLMMFISIYYAPLHLAL, PHTITVLALPYLLFHFFWNNH, LSIQCVFLNNLIFQLFNHFIL, VGWLIGHILFMKWVGLVLFWI, and IFSILLFITCVYYLGRMPAPI. Residues 247–314 are disordered; the sequence is KETSKTEERG…TEEIRVNGKE (68 aa). A compositionally biased stretch (acidic residues) spans 256–268; that stretch reads GESEEERDVEIET. The span at 273-284 shows a compositional bias: basic and acidic residues; it reads KGTKQEQERSTE. Over residues 295–306 the composition is skewed to acidic residues; sequence EKEDPDKIDETE.

The protein belongs to the TIC214 family. Part of the Tic complex.

The protein resides in the plastid. The protein localises to the chloroplast inner membrane. Functionally, involved in protein precursor import into chloroplasts. May be part of an intermediate translocation complex acting as a protein-conducting channel at the inner envelope. The chain is Protein TIC 214 from Buxus microphylla (Littleleaf boxwood).